Consider the following 436-residue polypeptide: GTPase Der (436 aa).

2 consecutive EngA-type G domains span residues 4-167 and 174-350; these read PVVA…PEVE and VRVA…EQRT. Residues 10–17, 57–61, 120–123, 180–187, 227–231, and 292–295 each bind GTP; these read GRPNVGKS, DTGGL, NKVD, DTAGL, and NKWD. Positions 351–435 constitute a KH-like domain; that stretch reads RRISTSEVND…PLRIILRRKN (85 aa).

The protein belongs to the TRAFAC class TrmE-Era-EngA-EngB-Septin-like GTPase superfamily. EngA (Der) GTPase family. Associates with the 50S ribosomal subunit.

Functionally, GTPase that plays an essential role in the late steps of ribosome biogenesis. In Gemmatimonas aurantiaca (strain DSM 14586 / JCM 11422 / NBRC 100505 / T-27), this protein is GTPase Der.